Here is a 157-residue protein sequence, read N- to C-terminus: DNA gyrase inhibitor (157 aa).

Belongs to the DNA gyrase inhibitor family. In terms of assembly, interacts with DNA gyrase.

It is found in the cytoplasm. Its function is as follows. Inhibits the supercoiling activity of DNA gyrase. Acts by inhibiting DNA gyrase at an early step, prior to (or at the step of) binding of DNA by the gyrase. It protects cells against toxins that target DNA gyrase, by inhibiting activity of these toxins and reducing the formation of lethal double-strand breaks in the cell. The sequence is that of DNA gyrase inhibitor from Cronobacter sakazakii (strain ATCC BAA-894) (Enterobacter sakazakii).